The following is a 151-amino-acid chain: Ribosome maturation factor RimP (151 aa).

Belongs to the RimP family.

Its subcellular location is the cytoplasm. Required for maturation of 30S ribosomal subunits. This Shewanella putrefaciens (strain CN-32 / ATCC BAA-453) protein is Ribosome maturation factor RimP.